The primary structure comprises 294 residues: UDP-3-O-acyl-N-acetylglucosamine deacetylase (294 aa).

Residues histidine 75, histidine 232, and aspartate 236 each contribute to the Zn(2+) site. Residue histidine 259 is the Proton donor of the active site.

It belongs to the LpxC family. Zn(2+) serves as cofactor.

It carries out the reaction a UDP-3-O-[(3R)-3-hydroxyacyl]-N-acetyl-alpha-D-glucosamine + H2O = a UDP-3-O-[(3R)-3-hydroxyacyl]-alpha-D-glucosamine + acetate. It functions in the pathway glycolipid biosynthesis; lipid IV(A) biosynthesis; lipid IV(A) from (3R)-3-hydroxytetradecanoyl-[acyl-carrier-protein] and UDP-N-acetyl-alpha-D-glucosamine: step 2/6. Functionally, catalyzes the hydrolysis of UDP-3-O-myristoyl-N-acetylglucosamine to form UDP-3-O-myristoylglucosamine and acetate, the committed step in lipid A biosynthesis. This Campylobacter hominis (strain ATCC BAA-381 / DSM 21671 / CCUG 45161 / LMG 19568 / NCTC 13146 / CH001A) protein is UDP-3-O-acyl-N-acetylglucosamine deacetylase.